Here is an 882-residue protein sequence, read N- to C-terminus: MTEQNEINMPTKYEPSNVEAGKYKWWLEKEFFKAEGNSDKKPYSIVIPPPNVTGKLHLGHAWDTTLQDIITRMKRMQGFDTLYLPGMDHAGIATQAKVEAKLKEENISRYDLGREKFVDKTWEWKEEYADFIREQWEKLGLGLDYSRERFTLDAGLSDAVKKVFVTLYNKGLIYRGQYIINWDPEAKTALSDIEVIHKDIEGSFYHLKYPLTDGSGYLEVATTRPETIPGDTAVAVHPKDERYQHLIGKTIMLPILNREIPIVADEYVEREFGSGAVKITPAHDPNDFEVGNRHDLPRIIVMHEDGTMNDNAGKYDGLDRFVARKAIIQDFKDLGLFIKQEPHLHSVGHSERTGAVVEPYLSLQWFVKMEPLAAEALALQKTEDKVNFVPARFEKTYETWMDNIHDWCISRQLWWGHRIPAWYHKETGEIYVGENEPENLDQWEQDEDVLDTWFSSALWPFSTMGWPDTENPDYKHFFPTNTLVTGYDIIFFWVSRMIFQSVEFTGERPFKDTLIHGLVRDSEGRKMSKSLGNGVDPIEVIDKYGADSLRYTLATGSSPGQDLKFSFEKVESTWNFINKIWNASRFVLMNLDGMKYDEIDLSNVTEVSDKWILTRLNETIQAVTSLGEKYEFGEVGRTLYNFIWDDFCDWYIEIAKIPLYGEDEVAKQTTRSVLAYTLNTTMRLLHPFMPFVTEEIWQNLPHEGESITISNWPEVNEQQMDSKASTAMRTLVEVIRAVRNIRAEVNTPLSKSIVLEIKPKDETYKEILEQNISYIERFCNPEKVTIAFDIEPSKTAMTAVVSGAEIFIPLEALIDLDLEIARLEKELEKWNKEVARVQGKLNNERFISKAPENVVAEERLKEKDYLEKKASVLERIETLKEV.

The 'HIGH' region signature appears at 50 to 60 (PNVTGKLHLGH). The 'KMSKS' region signature appears at 526 to 530 (KMSKS). Lys-529 is a binding site for ATP. Residues 810–881 (LEALIDLDLE…VLERIETLKE (72 aa)) adopt a coiled-coil conformation.

The protein belongs to the class-I aminoacyl-tRNA synthetase family. ValS type 1 subfamily. As to quaternary structure, monomer.

It is found in the cytoplasm. It catalyses the reaction tRNA(Val) + L-valine + ATP = L-valyl-tRNA(Val) + AMP + diphosphate. Its function is as follows. Catalyzes the attachment of valine to tRNA(Val). As ValRS can inadvertently accommodate and process structurally similar amino acids such as threonine, to avoid such errors, it has a 'posttransfer' editing activity that hydrolyzes mischarged Thr-tRNA(Val) in a tRNA-dependent manner. The sequence is that of Valine--tRNA ligase from Listeria innocua serovar 6a (strain ATCC BAA-680 / CLIP 11262).